A 442-amino-acid chain; its full sequence is Proline--tRNA ligase (442 aa).

The protein belongs to the class-II aminoacyl-tRNA synthetase family. ProS type 2 subfamily. Homodimer.

The protein resides in the cytoplasm. It catalyses the reaction tRNA(Pro) + L-proline + ATP = L-prolyl-tRNA(Pro) + AMP + diphosphate. Catalyzes the attachment of proline to tRNA(Pro) in a two-step reaction: proline is first activated by ATP to form Pro-AMP and then transferred to the acceptor end of tRNA(Pro). This chain is Proline--tRNA ligase, found in Chelativorans sp. (strain BNC1).